The sequence spans 294 residues: Proline iminopeptidase (294 aa).

The AB hydrolase-1 domain occupies 27–277 (PPLVLLHGGP…GCGHMSFVEK (251 aa)). The active-site Nucleophile is Ser-105. The active site involves Asp-244. His-271 (proton donor) is an active-site residue.

It belongs to the peptidase S33 family.

The protein resides in the cell envelope. The enzyme catalyses Release of N-terminal proline from a peptide.. Its function is as follows. Releases the N-terminal proline from various substrates. In Lactobacillus helveticus (strain DPC 4571), this protein is Proline iminopeptidase.